A 197-amino-acid polypeptide reads, in one-letter code: MNLIPTVIEQTNRGERAYDIYSRLLKDRIIMLGSAIDDNVANSIVSQLLFLAAEDPEKEISLYINSPGGSITAGMAIYDTMQFIKPKVSTICIGMAASMGAFLLAAGEKGKRYALPNSEVMIHQPLGGAQGQATEIEIAAKRILLLRDKLNKVLAERTGQPLEVIERDTDRDNFKSAEEALEYGLIDKILTHTEDKK.

Residue Ser98 is the Nucleophile of the active site. His123 is an active-site residue.

It belongs to the peptidase S14 family. As to quaternary structure, fourteen ClpP subunits assemble into 2 heptameric rings which stack back to back to give a disk-like structure with a central cavity, resembling the structure of eukaryotic proteasomes. Forms large heterooligomeric complexes consisting of an ATPase component (ClpX, ClpC or ClpE) and a proteolytic component (ClpP).

The protein localises to the cytoplasm. The catalysed reaction is Hydrolysis of proteins to small peptides in the presence of ATP and magnesium. alpha-casein is the usual test substrate. In the absence of ATP, only oligopeptides shorter than five residues are hydrolyzed (such as succinyl-Leu-Tyr-|-NHMec, and Leu-Tyr-Leu-|-Tyr-Trp, in which cleavage of the -Tyr-|-Leu- and -Tyr-|-Trp bonds also occurs).. Low intrinsic peptidase activity is stimulated by ATP-binding subunits ClpC, ClpE and ClpX. Activity is disregulated by acyldepsipeptides (ADEP) antibiotics, which negate the need for ATP-binding subunits for activation and which makes it into an unregulated protease. Each ClpP subunit binds 1 ADEP molecule, which prevents binding of ClpX. ADEP binding causes conformational shifts that open the gated pore of the ring. Protease activity is inhibited by diisopropylfluoro-phosphate. Protease activity is inhibited by bortezomib, an oncology drug originally designed to work on the human proteasome. Functionally, cleaves peptides in various proteins in a process that requires ATP hydrolysis. Has a limited peptidase activity in the absence of ATP-binding subunits ClpC, ClpE or ClpX. Has a chymotrypsin-like activity. Plays a major role in the degradation of misfolded proteins. ClpXP is involved in the complete degradation of the site-2 clipped anti-sigma-W factor RsiW. This results in the release of SigW and the transcriptional activation of genes under the control of the sigma-W factor. Probably the major protease that degrades proteins tagged by trans-translation. In Bacillus subtilis (strain 168), this protein is ATP-dependent Clp protease proteolytic subunit.